A 156-amino-acid polypeptide reads, in one-letter code: ATP synthase subunit b (156 aa).

Residues 7–26 (LIGQAIWFALFIWITMKYVW) form a helical membrane-spanning segment.

It belongs to the ATPase B chain family. F-type ATPases have 2 components, F(1) - the catalytic core - and F(0) - the membrane proton channel. F(1) has five subunits: alpha(3), beta(3), gamma(1), delta(1), epsilon(1). F(0) has three main subunits: a(1), b(2) and c(10-14). The alpha and beta chains form an alternating ring which encloses part of the gamma chain. F(1) is attached to F(0) by a central stalk formed by the gamma and epsilon chains, while a peripheral stalk is formed by the delta and b chains.

The protein localises to the cell inner membrane. In terms of biological role, f(1)F(0) ATP synthase produces ATP from ADP in the presence of a proton or sodium gradient. F-type ATPases consist of two structural domains, F(1) containing the extramembraneous catalytic core and F(0) containing the membrane proton channel, linked together by a central stalk and a peripheral stalk. During catalysis, ATP synthesis in the catalytic domain of F(1) is coupled via a rotary mechanism of the central stalk subunits to proton translocation. Its function is as follows. Component of the F(0) channel, it forms part of the peripheral stalk, linking F(1) to F(0). In Dechloromonas aromatica (strain RCB), this protein is ATP synthase subunit b.